The following is a 97-amino-acid chain: Large ribosomal subunit protein uL23 (97 aa).

The protein belongs to the universal ribosomal protein uL23 family. In terms of assembly, part of the 50S ribosomal subunit. Contacts protein L29, and trigger factor when it is bound to the ribosome.

In terms of biological role, one of the early assembly proteins it binds 23S rRNA. One of the proteins that surrounds the polypeptide exit tunnel on the outside of the ribosome. Forms the main docking site for trigger factor binding to the ribosome. In Myxococcus xanthus (strain DK1622), this protein is Large ribosomal subunit protein uL23.